The primary structure comprises 1153 residues: Cytosolic carboxypeptidase 1 (1153 aa).

A disordered region spans residues 357–400 (NQPPGVDDVVDESDENEATEVDTENDTENEEDDTGHKTQNDDIE). Positions 364-389 (DVVDESDENEATEVDTENDTENEEDD) are enriched in acidic residues. The Peptidase M14 domain occupies 774-1063 (YPYTYSMLKM…QFCLALLRLR (290 aa)). Residues histidine 845, glutamate 848, and histidine 942 each contribute to the Zn(2+) site. The Proton donor/acceptor role is filled by glutamate 1027. Residues 1108–1128 (AFLEEVDYSAESNDENDPELE) are compositionally biased toward acidic residues. The disordered stretch occupies residues 1108-1153 (AFLEEVDYSAESNDENDPELEPDLRDNHALPDPSSDSELSHQDSLT). A compositionally biased stretch (polar residues) spans 1141 to 1153 (SSDSELSHQDSLT).

This sequence belongs to the peptidase M14 family. Zn(2+) serves as cofactor.

It is found in the cytoplasm. Its subcellular location is the cytosol. The protein resides in the nucleus. The protein localises to the mitochondrion. The enzyme catalyses (L-glutamyl)(n+1)-gamma-L-glutamyl-L-glutamyl-[protein] + H2O = (L-glutamyl)(n)-gamma-L-glutamyl-L-glutamyl-[protein] + L-glutamate. It carries out the reaction C-terminal L-alpha-aminoacyl-L-glutamyl-L-glutamyl-[tubulin] + H2O = C-terminal L-alpha-aminoacyl-L-glutamyl-[tubulin] + L-glutamate. Its function is as follows. Metallocarboxypeptidase that mediates protein deglutamylation of tubulin and non-tubulin target proteins. Catalyzes the removal of polyglutamate side chains present on the gamma-carboxyl group of glutamate residues within the C-terminal tail of alpha- and beta-tubulin. Specifically cleaves tubulin long-side-chains, while it is not able to remove the branching point glutamate. Also catalyzes the removal of polyglutamate residues from the carboxy-terminus of alpha-tubulin as well as non-tubulin proteins. This chain is Cytosolic carboxypeptidase 1 (agtpbp1), found in Danio rerio (Zebrafish).